The following is a 296-amino-acid chain: MTEHSFKQIDVFSNKGFRGNPVAVFFDADNLSQKEMQQIAKWTNLSETTFVQKPTIDKADYRLRIFTPECELSFAGHPTIGSCFAVVESGYCTPKNCKIIQECLAGLVELTIDGEKDEDTWISFKLPYYKILQTSETAISEVENALGIPLNYSSQVSPPVLIDDGPKWLVIQLPNATDVLNLVPKFQSLSQVCKNNDWIGVTVFGELGKDSFESRSFAPLIHVNEDPACGSGAGAVGVYIGSSQKTPTSLSFTISQGTKLSRQAISKVSVDVSSNKSIAVFVGGQAKTCISGKSFI.

Glu-47 is a catalytic residue.

Belongs to the PhzF family.

In terms of biological role, may have isomerase activity. Enhances target gene silencing when coexpressed with antisense RNA. This Schizosaccharomyces pombe (strain 972 / ATCC 24843) (Fission yeast) protein is Antisense-enhancing sequence 1 (aes1).